The primary structure comprises 987 residues: MNKTVVRCLLSRSHHPLIHFSTNLSLLHRVFTCSRYLTARFMSTPPPDDMFGFDDPFSPSDSREVVDLTKEYSFLHDSLVDYGNVNVHQVVPIITQSSIDARAIADAVSGVDDVFGRKSQKFLRQFREKLSESLVIEVLRLIARPSAVISFFVWAGRQIGYKHTAPVYNALVDLIVRDDDEKVPEEFLQQIRDDDKEVFGEFLNVLVRKHCRNGSFSIALEELGRLKDFRFRPSRSTYNCLIQAFLKADRLDSASLIHREMSLANLRMDGFTLRCFAYSLCKVGKWREALTLVETENFVPDTVFYTKLISGLCEASLFEEAMDFLNRMRATSCLPNVVTYSTLLCGCLNKKQLGRCKRVLNMMMMEGCYPSPKIFNSLVHAYCTSGDHSYAYKLLKKMVKCGHMPGYVVYNILIGSICGDKDSLNCDLLDLAEKAYSEMLAAGVVLNKINVSSFTRCLCSAGKYEKAFSVIREMIGQGFIPDTSTYSKVLNYLCNASKMELAFLLFEEMKRGGLVADVYTYTIMVDSFCKAGLIEQARKWFNEMREVGCTPNVVTYTALIHAYLKAKKVSYANELFETMLSEGCLPNIVTYSALIDGHCKAGQVEKACQIFERMCGSKDVPDVDMYFKQYDDNSERPNVVTYGALLDGFCKSHRVEEARKLLDAMSMEGCEPNQIVYDALIDGLCKVGKLDEAQEVKTEMSEHGFPATLYTYSSLIDRYFKVKRQDLASKVLSKMLENSCAPNVVIYTEMIDGLCKVGKTDEAYKLMQMMEEKGCQPNVVTYTAMIDGFGMIGKIETCLELLERMGSKGVAPNYVTYRVLIDHCCKNGALDVAHNLLEEMKQTHWPTHTAGYRKVIEGFNKEFIESLGLLDEIGQDDTAPFLSVYRLLIDNLIKAQRLEMALRLLEEVATFSATLVDYSSTYNSLIESLCLANKVETAFQLFSEMTKKGVIPEMQSFCSLIKGLFRNSKISEALLLLDFISHMVCPL.

A mitochondrion-targeting transit peptide spans 1–42; the sequence is MNKTVVRCLLSRSHHPLIHFSTNLSLLHRVFTCSRYLTARFM. 22 PPR repeats span residues 164–198, 199–233, 234–268, 269–299, 301–335, 336–370, 371–405, 406–446, 447–481, 482–516, 517–551, 552–586, 587–621, 638–672, 673–707, 708–742, 743–777, 778–812, 813–847, 881–915, 918–952, and 953–987; these read TAPVYNALVDLIVRDDDEKVPEEFLQQIRDDDKEV, FGEFLNVLVRKHCRNGSFSIALEELGRLKDFRFRP, SRSTYNCLIQAFLKADRLDSASLIHREMSLANLRM, DGFTLRCFAYSLCKVGKWREALTLVETENFV, DTVFYTKLISGLCEASLFEEAMDFLNRMRATSCLP, NVVTYSTLLCGCLNKKQLGRCKRVLNMMMMEGCYP, SPKIFNSLVHAYCTSGDHSYAYKLLKKMVKCGHMP, GYVV…GVVL, NKINVSSFTRCLCSAGKYEKAFSVIREMIGQGFIP, DTSTYSKVLNYLCNASKMELAFLLFEEMKRGGLVA, DVYTYTIMVDSFCKAGLIEQARKWFNEMREVGCTP, NVVTYTALIHAYLKAKKVSYANELFETMLSEGCLP, NIVTYSALIDGHCKAGQVEKACQIFERMCGSKDVP, NVVTYGALLDGFCKSHRVEEARKLLDAMSMEGCEP, NQIVYDALIDGLCKVGKLDEAQEVKTEMSEHGFPA, TLYTYSSLIDRYFKVKRQDLASKVLSKMLENSCAP, NVVIYTEMIDGLCKVGKTDEAYKLMQMMEEKGCQP, NVVTYTAMIDGFGMIGKIETCLELLERMGSKGVAP, NYVTYRVLIDHCCKNGALDVAHNLLEEMKQTHWPT, FLSVYRLLIDNLIKAQRLEMALRLLEEVATFSATL, YSSTYNSLIESLCLANKVETAFQLFSEMTKKGVIP, and EMQSFCSLIKGLFRNSKISEALLLLDFISHMVCPL.

The protein belongs to the PPR family. P subfamily.

It localises to the mitochondrion. The polypeptide is Pentatricopeptide repeat-containing protein At1g06710, mitochondrial (Arabidopsis thaliana (Mouse-ear cress)).